The sequence spans 122 residues: Large ribosomal subunit protein uL14c (122 aa).

It belongs to the universal ribosomal protein uL14 family. Part of the 50S ribosomal subunit.

It is found in the plastid. The protein localises to the chloroplast. In terms of biological role, binds to 23S rRNA. The chain is Large ribosomal subunit protein uL14c from Cryptomeria japonica (Japanese cedar).